Consider the following 220-residue polypeptide: Cell division protein SepF (220 aa).

Residues 1–120 (MAIKDAFNKM…RREQYQHAAH (120 aa)) form a disordered region. A compositionally biased stretch (basic and acidic residues) spans 26-35 (LSSKKQEEPV). Positions 39-79 (QQTSRPNQQQQAARASQPQQPKQARPQMQAQQRPQSQSRAA) are enriched in low complexity. Over residues 93-102 (VSHDYNDRRA) the composition is skewed to basic and acidic residues.

The protein belongs to the SepF family. Homodimer. Interacts with FtsZ.

The protein localises to the cytoplasm. Cell division protein that is part of the divisome complex and is recruited early to the Z-ring. Probably stimulates Z-ring formation, perhaps through the cross-linking of FtsZ protofilaments. Its function overlaps with FtsA. The polypeptide is Cell division protein SepF (Streptococcus equi subsp. equi (strain 4047)).